The primary structure comprises 174 residues: Shikimate kinase 2 (174 aa).

Gly12–Thr17 provides a ligand contact to ATP. The Mg(2+) site is built by Thr16 and Asp32. Asp34, Arg58, and Gly79 together coordinate substrate. The LID domain stretch occupies residues Gln112 to Lys126. Arg120 contributes to the ATP binding site. Arg139 serves as a coordination point for substrate.

The protein belongs to the shikimate kinase family. AroL subfamily. As to quaternary structure, monomer. Requires Mg(2+) as cofactor.

The protein localises to the cytoplasm. It catalyses the reaction shikimate + ATP = 3-phosphoshikimate + ADP + H(+). Its pathway is metabolic intermediate biosynthesis; chorismate biosynthesis; chorismate from D-erythrose 4-phosphate and phosphoenolpyruvate: step 5/7. Catalyzes the specific phosphorylation of the 3-hydroxyl group of shikimic acid using ATP as a cosubstrate. The sequence is that of Shikimate kinase 2 from Shigella boydii serotype 18 (strain CDC 3083-94 / BS512).